Here is a 406-residue protein sequence, read N- to C-terminus: Probable G-protein coupled receptor tkr-1 (406 aa).

Residues 1 to 47 (MNQEFLIQLGERACKNAENLTLPAELEGIFFCAPSSRESLATQVFVA) lie on the Extracellular side of the membrane. Residues 48-68 (IAFVLLMATAIIGNSVVMWII) traverse the membrane as a helical segment. Topologically, residues 69–76 (YQHKVMHY) are cytoplasmic. Residues 77–97 (GFNYFLFNMAFADLLIALFNV) traverse the membrane as a helical segment. Over 98–115 (GTSWTYNLYYDWWYGDLC) the chain is Extracellular. The chain crosses the membrane as a helical span at residues 116–136 (TLTSFFGIAPTTVSVCSMMAL). Residues 137-158 (SWDRCQAVVNPLQKRPLSRKRS) lie on the Cytoplasmic side of the membrane. Residues 159–179 (VIAILIIWVVSTVTALPFAIA) form a helical membrane-spanning segment. Topologically, residues 180 to 204 (ASVNSLYTYDVVTSTVSKAHVCSAP) are extracellular. Residues 205-225 (VNTFFEKVLFGIQYALPIIIL) traverse the membrane as a helical segment. Residues 226-261 (GSTFTRIAVAFRATNEATDSSLKNNHTRAKSKAVKM) lie on the Cytoplasmic side of the membrane. A helical membrane pass occupies residues 262–282 (LFLMVVAFVVCWLPYHIYHAF). At 283–297 (ALEEFFDAARGKYAY) the chain is on the extracellular side. Residues 298 to 318 (LLIYWIAMSSCAYNPIIYCFA) traverse the membrane as a helical segment. The Cytoplasmic portion of the chain corresponds to 319-406 (NERFRIGFRY…KVHLLSCHER (88 aa)).

It belongs to the G-protein coupled receptor 1 family.

The protein localises to the cell membrane. In terms of biological role, not known. Putative receptor. The sequence is that of Probable G-protein coupled receptor tkr-1 (tkr-1) from Caenorhabditis elegans.